A 292-amino-acid polypeptide reads, in one-letter code: Pantothenate synthetase (292 aa).

32 to 39 is a binding site for ATP; that stretch reads MGFLHEGH. Residue His39 is the Proton donor of the active site. Gln63 is a (R)-pantoate binding site. Position 63 (Gln63) interacts with beta-alanine. 150–153 is a binding site for ATP; sequence GEKD. Gln156 lines the (R)-pantoate pocket. Residues Val179 and 187–190 each bind ATP; that span reads MSSR.

Belongs to the pantothenate synthetase family. In terms of assembly, homodimer.

It localises to the cytoplasm. It catalyses the reaction (R)-pantoate + beta-alanine + ATP = (R)-pantothenate + AMP + diphosphate + H(+). Its pathway is cofactor biosynthesis; (R)-pantothenate biosynthesis; (R)-pantothenate from (R)-pantoate and beta-alanine: step 1/1. Catalyzes the condensation of pantoate with beta-alanine in an ATP-dependent reaction via a pantoyl-adenylate intermediate. The polypeptide is Pantothenate synthetase (Myxococcus xanthus (strain DK1622)).